The chain runs to 275 residues: Protein rolling stone (275 aa).

6 helical membrane-spanning segments follow: residues 45–65 (LLYR…CVIV), 72–92 (FFIY…LISA), 127–147 (WLYN…WVFL), 162–182 (IITH…IAFP), 185–205 (ILHM…TLIY), and 232–252 (MVTF…LFGL).

As to expression, expressed in cells of the somatic mesoderm, most notably the muscle founder cells, between embryonic stages 12 and 14, in growing muscle fibers in dorsal, lateral and ventral positions. At stage 16 strongest expression is in some ventral muscles and muscle 8. At stages 16/17 expression is restricted to some cells of the CNS, the brain and the gonads.

The protein resides in the membrane. Functionally, may have a central role in the fusion process during myogenesis, within the somatic mesoderm. The protein is Protein rolling stone (rost) of Drosophila melanogaster (Fruit fly).